The following is a 344-amino-acid chain: Probable dual-specificity RNA methyltransferase RlmN (344 aa).

E92 functions as the Proton acceptor in the catalytic mechanism. The Radical SAM core domain maps to 98 to 325 (DEDRATLCVS…TTIRASRGED (228 aa)). A disulfide bridge connects residues C105 and C330. [4Fe-4S] cluster-binding residues include C112, C116, and C119. S-adenosyl-L-methionine contacts are provided by residues 157-158 (GE), S189, 211-213 (SLH), and H287. C330 acts as the S-methylcysteine intermediate in catalysis.

Belongs to the radical SAM superfamily. RlmN family. [4Fe-4S] cluster serves as cofactor.

The protein localises to the cytoplasm. It catalyses the reaction adenosine(2503) in 23S rRNA + 2 reduced [2Fe-2S]-[ferredoxin] + 2 S-adenosyl-L-methionine = 2-methyladenosine(2503) in 23S rRNA + 5'-deoxyadenosine + L-methionine + 2 oxidized [2Fe-2S]-[ferredoxin] + S-adenosyl-L-homocysteine. The enzyme catalyses adenosine(37) in tRNA + 2 reduced [2Fe-2S]-[ferredoxin] + 2 S-adenosyl-L-methionine = 2-methyladenosine(37) in tRNA + 5'-deoxyadenosine + L-methionine + 2 oxidized [2Fe-2S]-[ferredoxin] + S-adenosyl-L-homocysteine. Its function is as follows. Specifically methylates position 2 of adenine 2503 in 23S rRNA and position 2 of adenine 37 in tRNAs. This is Probable dual-specificity RNA methyltransferase RlmN from Bacteroides fragilis (strain YCH46).